The sequence spans 393 residues: Acetate kinase (393 aa).

N8 contacts Mg(2+). Residue K15 participates in ATP binding. Position 91 (R91) interacts with substrate. The active-site Proton donor/acceptor is D148. ATP is bound by residues 206-210, 280-282, and 325-329; these read HLGSG, DMR, and GVGEN. E376 contacts Mg(2+).

This sequence belongs to the acetokinase family. In terms of assembly, homodimer. Mg(2+) is required as a cofactor. Requires Mn(2+) as cofactor.

It is found in the cytoplasm. It carries out the reaction acetate + ATP = acetyl phosphate + ADP. It functions in the pathway metabolic intermediate biosynthesis; acetyl-CoA biosynthesis; acetyl-CoA from acetate: step 1/2. Functionally, catalyzes the formation of acetyl phosphate from acetate and ATP. Can also catalyze the reverse reaction. This Rhizobium meliloti (Ensifer meliloti) protein is Acetate kinase.